The chain runs to 103 residues: Co-chaperonin GroES (103 aa).

It belongs to the GroES chaperonin family. In terms of assembly, heptamer of 7 subunits arranged in a ring. Interacts with the chaperonin GroEL.

Its subcellular location is the cytoplasm. Functionally, together with the chaperonin GroEL, plays an essential role in assisting protein folding. The GroEL-GroES system forms a nano-cage that allows encapsulation of the non-native substrate proteins and provides a physical environment optimized to promote and accelerate protein folding. GroES binds to the apical surface of the GroEL ring, thereby capping the opening of the GroEL channel. The protein is Co-chaperonin GroES of Nostoc punctiforme (strain ATCC 29133 / PCC 73102).